The sequence spans 337 residues: tRNA N6-adenosine threonylcarbamoyltransferase (337 aa).

Residues His114 and His118 each coordinate Fe cation. Residues 136–140 (LVSGG), Asp169, Gly182, Asp186, and Asn275 each bind substrate. Asp301 contributes to the Fe cation binding site.

This sequence belongs to the KAE1 / TsaD family. Requires Fe(2+) as cofactor.

It localises to the cytoplasm. It catalyses the reaction L-threonylcarbamoyladenylate + adenosine(37) in tRNA = N(6)-L-threonylcarbamoyladenosine(37) in tRNA + AMP + H(+). In terms of biological role, required for the formation of a threonylcarbamoyl group on adenosine at position 37 (t(6)A37) in tRNAs that read codons beginning with adenine. Is involved in the transfer of the threonylcarbamoyl moiety of threonylcarbamoyl-AMP (TC-AMP) to the N6 group of A37, together with TsaE and TsaB. TsaD likely plays a direct catalytic role in this reaction. The chain is tRNA N6-adenosine threonylcarbamoyltransferase from Streptococcus thermophilus (strain CNRZ 1066).